Here is a 125-residue protein sequence, read N- to C-terminus: Large ribosomal subunit protein bL17 (125 aa).

It belongs to the bacterial ribosomal protein bL17 family. In terms of assembly, part of the 50S ribosomal subunit. Contacts protein L32.

In Acinetobacter baylyi (strain ATCC 33305 / BD413 / ADP1), this protein is Large ribosomal subunit protein bL17.